The chain runs to 697 residues: MSMFNIVRKEFQFGQHQVVLETGRVARQANTVLITMGGVTVLVAVVAAPTAKAGQDFFPLTVNYQEKQYAAGRIPGGYGKREGRASEAETLISRLIDRPIRPLFPEGYYNEIQVTATVVSSDKTMEADIAAMLGTSAALAIAGTPFRGPIGAARVGLINGEYVLNPNFEQMAQSDLDLVVAGTESAVLMVESEAKELSEDQMLGAVLFGHDEMQIAIQAINEFAAAAGAKPSDWVAPAHNEELRAKLKEAFEAKISEAYTIAVKQDRYAALDALHAEAVAQFVPEEDVDGIADEVDYLFEDLKYRTVRDNILSGKPRIDGRDTKTVRALDVQVGVLERAHGSALFTRGETQALVTTTLGNTRDALMVDTLAGTKTDNFMLHYNFPAYSVGETGRESGPKRREIGHGRLARRGVQAVLPAADRFPYVIRIVSDITESNGSSSMASVCGASLSLMDAGVPLKAPVAGIAMGLVKEGERFAVLSDILGDEDHLGDMDFKVAGSANGITALQMDIKIEGITEEIMEVALNQAFAGRMHILNEMNKVISRARPEISMHAPTFEVITINPDKIRDVIGKGGATIRQITEETKAAIDIEDNGTVRVFGETKAAAKAAIAKIQAITAEVEPGKIYDGKVIRIVEFGAFVNIMPGTDGLLHISQISNERIANVTDVLKEGQEVKVQVQDVDNRGRIKLTMKDIEQA.

The Mg(2+) site is built by D488 and D494. Residues 555–614 (PTFEVITINPDKIRDVIGKGGATIRQITEETKAAIDIEDNGTVRVFGETKAAAKAAIAKI) enclose the KH domain. Residues 624-692 (GKIYDGKVIR…NRGRIKLTMK (69 aa)) enclose the S1 motif domain.

This sequence belongs to the polyribonucleotide nucleotidyltransferase family. In terms of assembly, component of the RNA degradosome, which is a multiprotein complex involved in RNA processing and mRNA degradation. Mg(2+) serves as cofactor.

Its subcellular location is the cytoplasm. It carries out the reaction RNA(n+1) + phosphate = RNA(n) + a ribonucleoside 5'-diphosphate. Its function is as follows. Involved in mRNA degradation. Catalyzes the phosphorolysis of single-stranded polyribonucleotides processively in the 3'- to 5'-direction. This chain is Polyribonucleotide nucleotidyltransferase, found in Acinetobacter baumannii (strain AB307-0294).